The sequence spans 66 residues: Alpha-like toxin Bom3 (66 aa).

Positions 2-66 (RDGYIAQPEN…PIVVGGEKCH (65 aa)) constitute an LCN-type CS-alpha/beta domain. Cystine bridges form between Cys12-Cys65, Cys16-Cys37, Cys23-Cys47, and Cys27-Cys49.

The protein belongs to the long (4 C-C) scorpion toxin superfamily. Sodium channel inhibitor family. Alpha subfamily. In terms of tissue distribution, expressed by the venom gland.

The protein localises to the secreted. Its function is as follows. Alpha toxins bind voltage-independently at site-3 of sodium channels (Nav) and inhibit the inactivation of the activated channels, thereby blocking neuronal transmission. As it competes neither with the classical alpha-toxin AaH2 nor the beta-toxin Css2, this toxin is an alpha-like toxin. The protein is Alpha-like toxin Bom3 of Buthus occitanus mardochei (Moroccan scorpion).